Consider the following 214-residue polypeptide: Serine protease inhibitor 2.1 (214 aa).

It belongs to the serpin family.

This is Serine protease inhibitor 2.1 from Rattus norvegicus (Rat).